Reading from the N-terminus, the 299-residue chain is Oxygen-dependent coproporphyrinogen-III oxidase (299 aa).

Ser92 is a binding site for substrate. Residues His96 and His106 each contribute to the Mn(2+) site. The Proton donor role is filled by His106. Position 108–110 (108–110 (NVR)) interacts with substrate. Positions 145 and 175 each coordinate Mn(2+). The tract at residues 240-275 (YVEFNLVWDRGTLFGLQTGGRTESILMSMPPLVRWE) is important for dimerization. 258–260 (GGR) lines the substrate pocket.

This sequence belongs to the aerobic coproporphyrinogen-III oxidase family. As to quaternary structure, homodimer. The cofactor is Mn(2+).

It is found in the cytoplasm. It carries out the reaction coproporphyrinogen III + O2 + 2 H(+) = protoporphyrinogen IX + 2 CO2 + 2 H2O. It functions in the pathway porphyrin-containing compound metabolism; protoporphyrin-IX biosynthesis; protoporphyrinogen-IX from coproporphyrinogen-III (O2 route): step 1/1. In terms of biological role, involved in the heme biosynthesis. Catalyzes the aerobic oxidative decarboxylation of propionate groups of rings A and B of coproporphyrinogen-III to yield the vinyl groups in protoporphyrinogen-IX. The protein is Oxygen-dependent coproporphyrinogen-III oxidase of Escherichia coli O7:K1 (strain IAI39 / ExPEC).